A 262-amino-acid chain; its full sequence is Beta-phosphoglucomutase (262 aa).

Catalysis depends on aspartate 29, which acts as the Nucleophile. The Mg(2+) site is built by aspartate 29 and aspartate 31. Position 29 is a 4-aspartylphosphate (aspartate 29). Catalysis depends on aspartate 31, which acts as the Proton donor/acceptor. Residues aspartate 31, glycine 79, arginine 82, serine 157, and asparagine 159 each coordinate beta-D-glucose 6-phosphate. Residue aspartate 215 coordinates Mg(2+).

The protein belongs to the HAD-like hydrolase superfamily. CbbY/CbbZ/Gph/YieH family. Monomer. The cofactor is Mg(2+). Post-translationally, autophosphorylated.

The catalysed reaction is beta-D-glucose 1-phosphate = beta-D-glucose 6-phosphate. In terms of biological role, catalyzes the interconversion of D-glucose 1-phosphate (G1P) and D-glucose 6-phosphate (G6P), forming beta-D-glucose 1,6-(bis)phosphate (beta-G16P) as an intermediate. This is Beta-phosphoglucomutase from Mycobacterium bovis (strain ATCC BAA-935 / AF2122/97).